The chain runs to 604 residues: Kelch-like protein 15 (604 aa).

The BTB domain occupies 31 to 98 (LDVTLVIEDH…MYYGTIELSM (68 aa)). In terms of domain architecture, BACK spans 133–237 (CAEIMRLLDD…TPSSVFEKVK (105 aa)). 5 Kelch repeats span residues 328–379 (FVFL…VIGK), 381–426 (IYAV…VLNN), 428–473 (LFIT…NKSK), 489–542 (KLYV…VLDK), and 544–590 (IMVL…VCNL).

In terms of assembly, homodimer. Dimerization does not affect PPP2R5B-binding, but is required for its proteasomal degradation. Interacts with CUL3. Directly interacts with PPP2R5B; this interaction leads to PPP2R5B proteasomal degradation. Interacts with RBBP8/CtIP; this interaction leads to RBBP8 proteasomal degradation. Interacts with PACMP micropeptide; interaction prevents ubiquitination and degradation of RBBP8/CtIP.

The protein localises to the nucleus. The protein operates within protein modification; protein ubiquitination. Substrate-specific adapter for CUL3 E3 ubiquitin-protein ligase complex. Acts as an adapter for CUL3 to target the serine/threonine-protein phosphatase 2A (PP2A) subunit PPP2R5B for ubiquitination and subsequent proteasomal degradation, thus promoting exchange with other regulatory subunits and regulating PP2A holoenzyme composition. Acts as an adapter for CUL3 to target the DNA-end resection factor RBBP8/CtIP for ubiquitination and subsequent proteasomal degradation. Through the regulation of RBBP8/CtIP protein turnover, plays a key role in DNA damage response, favoring DNA double-strand repair through error-prone non-homologous end joining (NHEJ) over error-free, RBBP8-mediated homologous recombination (HR). This Mus musculus (Mouse) protein is Kelch-like protein 15 (Klhl15).